The sequence spans 354 residues: Ornithine transcarbamylase, mitochondrial (354 aa).

Residues M1 to Q32 constitute a mitochondrion transit peptide. Residues S90–R94, R141, and H168 contribute to the carbamoyl phosphate site. L-ornithine is bound at residue R141. L-ornithine is bound by residues N199, D263–S267, H302–P305, and R330. Residue C303 is part of the active site. R330 provides a ligand contact to carbamoyl phosphate.

This sequence belongs to the aspartate/ornithine carbamoyltransferase superfamily. OTCase family. As to quaternary structure, homotrimer. Cleavage of the precursor form to the active form occurs only in the kidney. Expressed in kidney, brain, heart, liver, pancreas, gizzard, small intestine and breast muscle. More abundant in mitochondrion-rich organs (heart, liver and brain) than in other organs. Activity is only detected in the kidney.

It localises to the mitochondrion matrix. The catalysed reaction is carbamoyl phosphate + L-ornithine = L-citrulline + phosphate + H(+). Its pathway is nitrogen metabolism; urea cycle; L-citrulline from L-ornithine and carbamoyl phosphate: step 1/1. Its activity is regulated as follows. Inhibition by ornithine increases at higher pH. Its function is as follows. Catalyzes the second step of the urea cycle, the condensation of carbamoyl phosphate with L-ornithine to form L-citrulline. The urea cycle ensures the detoxification of ammonia by converting it to urea for excretion. The protein is Ornithine transcarbamylase, mitochondrial of Gallus gallus (Chicken).